Here is a 351-residue protein sequence, read N- to C-terminus: Putative aminodehydroquinate synthase (351 aa).

NAD(+) contacts are provided by residues 65-68 (EPTK), 97-101 (GTTTD), 121-122 (TS), K134, K143, and 161-164 (YLTT). Zn(2+) contacts are provided by E176, H225, and H241.

This sequence belongs to the sugar phosphate cyclases superfamily. aDHQS family. It depends on NAD(+) as a cofactor. Co(2+) is required as a cofactor. The cofactor is Zn(2+).

May catalyze the conversion of 3,4-dideoxy-4-amino-D-arabino-heptulosonate 7-phosphate (aDAHP) to 5-deoxy-5-amino-3-dehydroquinate (aDHQ). Probably involved in the formation of 3-amino-5-hydroxybenzoic acid (AHBA), the precursor of rifamycin and related ansamycins. This is Putative aminodehydroquinate synthase from Amycolatopsis mediterranei (strain S699) (Nocardia mediterranei).